A 337-amino-acid polypeptide reads, in one-letter code: 4-hydroxythreonine-4-phosphate dehydrogenase (337 aa).

Substrate contacts are provided by His-137 and Thr-138. A divalent metal cation is bound by residues His-167, His-212, and His-267. The substrate site is built by Lys-275, Asn-284, and Arg-293.

Belongs to the PdxA family. Homodimer. Zn(2+) is required as a cofactor. Requires Mg(2+) as cofactor. It depends on Co(2+) as a cofactor.

The protein resides in the cytoplasm. It catalyses the reaction 4-(phosphooxy)-L-threonine + NAD(+) = 3-amino-2-oxopropyl phosphate + CO2 + NADH. It functions in the pathway cofactor biosynthesis; pyridoxine 5'-phosphate biosynthesis; pyridoxine 5'-phosphate from D-erythrose 4-phosphate: step 4/5. Its function is as follows. Catalyzes the NAD(P)-dependent oxidation of 4-(phosphooxy)-L-threonine (HTP) into 2-amino-3-oxo-4-(phosphooxy)butyric acid which spontaneously decarboxylates to form 3-amino-2-oxopropyl phosphate (AHAP). The sequence is that of 4-hydroxythreonine-4-phosphate dehydrogenase from Ectopseudomonas mendocina (strain ymp) (Pseudomonas mendocina).